A 416-amino-acid polypeptide reads, in one-letter code: Probable pectate lyase 8 (416 aa).

A signal peptide spans 1-24 (MAVTKLILFASALLLTALFIGVNA). Residues N23, N28, and N52 are each glycosylated (N-linked (GlcNAc...) asparagine). 3 residues coordinate Ca(2+): D214, D238, and D242. R294 is a catalytic residue.

This sequence belongs to the polysaccharide lyase 1 family. Requires Ca(2+) as cofactor.

It catalyses the reaction Eliminative cleavage of (1-&gt;4)-alpha-D-galacturonan to give oligosaccharides with 4-deoxy-alpha-D-galact-4-enuronosyl groups at their non-reducing ends.. It functions in the pathway glycan metabolism; pectin degradation; 2-dehydro-3-deoxy-D-gluconate from pectin: step 2/5. The chain is Probable pectate lyase 8 from Arabidopsis thaliana (Mouse-ear cress).